A 414-amino-acid chain; its full sequence is Phosphoglycerate kinase (414 aa).

Substrate is bound by residues 20–22, Arg37, 60–63, Arg117, and Arg164; these read DIN and HQSR. Residues Glu338 and 364–367 contribute to the ATP site; that span reads GGHL.

This sequence belongs to the phosphoglycerate kinase family. Monomer.

The protein resides in the cytoplasm. The enzyme catalyses (2R)-3-phosphoglycerate + ATP = (2R)-3-phospho-glyceroyl phosphate + ADP. It participates in carbohydrate degradation; glycolysis; pyruvate from D-glyceraldehyde 3-phosphate: step 2/5. This is Phosphoglycerate kinase from Methanococcus maripaludis (strain DSM 14266 / JCM 13030 / NBRC 101832 / S2 / LL).